We begin with the raw amino-acid sequence, 199 residues long: Nucleoside triphosphate pyrophosphatase (199 aa).

Catalysis depends on D72, which acts as the Proton acceptor.

The protein belongs to the Maf family. A divalent metal cation is required as a cofactor.

The protein resides in the cytoplasm. The catalysed reaction is a ribonucleoside 5'-triphosphate + H2O = a ribonucleoside 5'-phosphate + diphosphate + H(+). It carries out the reaction a 2'-deoxyribonucleoside 5'-triphosphate + H2O = a 2'-deoxyribonucleoside 5'-phosphate + diphosphate + H(+). Nucleoside triphosphate pyrophosphatase. May have a dual role in cell division arrest and in preventing the incorporation of modified nucleotides into cellular nucleic acids. The polypeptide is Nucleoside triphosphate pyrophosphatase (Synechococcus elongatus (strain ATCC 33912 / PCC 7942 / FACHB-805) (Anacystis nidulans R2)).